A 78-amino-acid polypeptide reads, in one-letter code: Acyl carrier protein (78 aa).

The Carrier domain maps to 2–77 (SDTAERVKKI…DAVKYIEKAT (76 aa)). O-(pantetheine 4'-phosphoryl)serine is present on S37.

This sequence belongs to the acyl carrier protein (ACP) family. 4'-phosphopantetheine is transferred from CoA to a specific serine of apo-ACP by AcpS. This modification is essential for activity because fatty acids are bound in thioester linkage to the sulfhydryl of the prosthetic group.

It is found in the cytoplasm. It functions in the pathway lipid metabolism; fatty acid biosynthesis. In terms of biological role, carrier of the growing fatty acid chain in fatty acid biosynthesis. This is Acyl carrier protein from Chelativorans sp. (strain BNC1).